Consider the following 339-residue polypeptide: Glucokinase (339 aa).

16-21 (GDIGGT) lines the ATP pocket.

It belongs to the bacterial glucokinase family.

It is found in the cytoplasm. The catalysed reaction is D-glucose + ATP = D-glucose 6-phosphate + ADP + H(+). The polypeptide is Glucokinase (Pseudomonas paraeruginosa (strain DSM 24068 / PA7) (Pseudomonas aeruginosa (strain PA7))).